Consider the following 791-residue polypeptide: uncharacterized protein (791 aa).

The chain crosses the membrane as a helical span at residues 10–30 (LLTITIGAVAVSSILLGGIFY). The segment covering 56 to 76 (NLDYQKARPSIKDNNLKEIPK) has biased composition (basic and acidic residues). The tract at residues 56-175 (NLDYQKARPS…PQPQQIPNQS (120 aa)) is disordered. Residues 77–97 (PKPQPKPEPQPTPFPDPIPTP) are compositionally biased toward pro residues. Basic and acidic residues predominate over residues 98–124 (PKKEELKKPEIKPEEPKKPEIKPEPIP). Pro residues predominate over residues 125–139 (KPKPQPIPQPTPPVE).

This sequence to U.parvum UU044.

Its subcellular location is the membrane. This is an uncharacterized protein from Ureaplasma parvum serovar 3 (strain ATCC 700970).